The following is a 393-amino-acid chain: 26S proteasome regulatory subunit 10B (393 aa).

178-185 is a binding site for ATP; it reads GPPGTGKT.

It belongs to the AAA ATPase family.

Its subcellular location is the cytoplasm. The protein resides in the nucleus. In terms of biological role, the 26S proteasome is involved in the ATP-dependent degradation of ubiquitinated proteins. The regulatory (or ATPase) complex confers ATP dependency and substrate specificity to the 26S complex. This Dictyostelium discoideum (Social amoeba) protein is 26S proteasome regulatory subunit 10B (psmC6).